The sequence spans 155 residues: Ribosomal RNA large subunit methyltransferase H (155 aa).

S-adenosyl-L-methionine-binding positions include L72, G103, and 122–127 (LSALTL).

The protein belongs to the RNA methyltransferase RlmH family. In terms of assembly, homodimer.

It localises to the cytoplasm. It carries out the reaction pseudouridine(1915) in 23S rRNA + S-adenosyl-L-methionine = N(3)-methylpseudouridine(1915) in 23S rRNA + S-adenosyl-L-homocysteine + H(+). Its function is as follows. Specifically methylates the pseudouridine at position 1915 (m3Psi1915) in 23S rRNA. This is Ribosomal RNA large subunit methyltransferase H from Citrobacter koseri (strain ATCC BAA-895 / CDC 4225-83 / SGSC4696).